A 323-amino-acid polypeptide reads, in one-letter code: uncharacterized protein (323 aa).

The active-site Proton donor is tyrosine 59. NADP(+) is bound at residue serine 198 to lysine 208.

This sequence belongs to the aldo/keto reductase family. Aldo/keto reductase 2 subfamily.

This is an uncharacterized protein from Mycobacterium tuberculosis (strain CDC 1551 / Oshkosh).